The chain runs to 138 residues: ATP synthase epsilon chain (138 aa).

This sequence belongs to the ATPase epsilon chain family. F-type ATPases have 2 components, CF(1) - the catalytic core - and CF(0) - the membrane proton channel. CF(1) has five subunits: alpha(3), beta(3), gamma(1), delta(1), epsilon(1). CF(0) has three main subunits: a, b and c.

Its subcellular location is the cell inner membrane. Functionally, produces ATP from ADP in the presence of a proton gradient across the membrane. This chain is ATP synthase epsilon chain, found in Delftia acidovorans (strain DSM 14801 / SPH-1).